We begin with the raw amino-acid sequence, 438 residues long: Death-associated inhibitor of apoptosis 1 (438 aa).

A BIR 1 repeat occupies 44–110 (EETRLKTFTD…QRWSPNCPLL (67 aa)). A disordered region spans residues 194-213 (TATQATGDVQPETCRPSAAS). One copy of the BIR 2 repeat lies at 226-293 (ETARLRTFEA…ALWLSQCRFV (68 aa)). Zn(2+) is bound by residues cysteine 263, cysteine 266, histidine 283, and cysteine 290. A disordered region spans residues 322–346 (GGVAVASTQASEEEQQTSLSSEEAV). Positions 327 to 345 (ASTQASEEEQQTSLSSEEA) are enriched in low complexity. The RING-type zinc finger occupies 391 to 426 (CKICYGAEYNTAFLPCGHVVACAKCASSVTKCPLCR).

Belongs to the IAP family. In terms of assembly, interacts (via BIR 2 domain) with Dronc (via residues 114-125). Rpr, hid and grim can outcompete Dronc for binding Diap1 therefore removing Diap1-mediated ubiquitination. Interacts (via BIR 2 domain) with HtrA2; this displaces any bound Dronc. Interacts with Strica. The N-terminally cleaved form interacts with Ubr3 (via UBR-type zinc finger); the interaction promotes the recruitment and uniquitination of substrate capases such as Dronc. Ubiquitinated and degraded by HtrA2 in apoptotic cells; proteolytic cleavage at specific sites in the BIR domain linker region generating inactive fragments. Mutation of one site reduces but does not abolish cleavage as another site is selected by the protease.

It carries out the reaction S-ubiquitinyl-[E2 ubiquitin-conjugating enzyme]-L-cysteine + [acceptor protein]-L-lysine = [E2 ubiquitin-conjugating enzyme]-L-cysteine + N(6)-ubiquitinyl-[acceptor protein]-L-lysine.. Functionally, anti-apoptotic protein which functions as a caspase regulator, using its E3 ubiquitin-protein ligase activity to smother caspase activity. Binds, ubiquitinates and inactivates initiator caspase Dronc, and effector caspases Drice and Dcp-1. Acts as a Nedd8-E3 ubiquitin-protein ligase for Drice. Suppresses apoptosis by targeting the apoptosome for ubiquitination and inactivation. Plays an important role in cell motility. Overexpression suppresses rpr and hid-dependent cell death in the eye. Interaction of Diap1 with Dronc is required to suppress Dronc-mediated cell death through Diap1-mediated ubiquitination of Dronc. Acts as a positive regulator of Wnt signaling. In Drosophila melanogaster (Fruit fly), this protein is Death-associated inhibitor of apoptosis 1 (Diap1).